Reading from the N-terminus, the 314-residue chain is FHA domain-containing protein DDL (314 aa).

Low complexity predominate over residues 1–10 (MAPSSRSPSP). The segment at 1 to 146 (MAPSSRSPSP…NVEEDSVARM (146 aa)) is disordered. Positions 18–127 (ARGEKEIGRS…AIASRHDEGS (110 aa)) are enriched in basic and acidic residues. Ser-133 carries the post-translational modification Phosphoserine. Residues 219 to 282 (YLFGRERRIA…NKTYINESPI (64 aa)) enclose the FHA domain.

As to quaternary structure, interacts with DCL1 (via N-terminus). Expressed in roots, lateral roots, vascular strands of roots and leaves, vegetative meristems, pollen and developing seeds.

The protein localises to the nucleus. Its function is as follows. Involved in the microRNA (miRNA) and short interfering RNA (siRNA) biogenesis. May facilitate DCL1 to access or recognize primary miRNAs. Binds RNA non-specifically. The polypeptide is FHA domain-containing protein DDL (DDL) (Arabidopsis thaliana (Mouse-ear cress)).